Consider the following 318-residue polypeptide: Malonyl CoA-acyl carrier protein transacylase, mitochondrial (318 aa).

This sequence belongs to the FabD family.

It localises to the mitochondrion. It catalyses the reaction holo-[ACP] + malonyl-CoA = malonyl-[ACP] + CoA. It participates in lipid metabolism; fatty acid biosynthesis. Functionally, involved in biosynthesis of fatty acids in mitochondria. This chain is Malonyl CoA-acyl carrier protein transacylase, mitochondrial (mct1), found in Schizosaccharomyces pombe (strain 972 / ATCC 24843) (Fission yeast).